The primary structure comprises 553 residues: uncharacterized protein (553 aa).

This is an uncharacterized protein from Rickettsia prowazekii (strain Madrid E).